The primary structure comprises 716 residues: Interleukin-31 receptor subunit alpha (716 aa).

Residues 1–18 form the signal peptide; it reads MWTLALWAFSFLCKFSLA. At 19-499 the chain is on the extracellular side; that stretch reads VLPTKPENIS…TNGVRINFKT (481 aa). 5 consecutive Fibronectin type-III domains span residues 23-115, 117-211, 213-304, 305-403, and 408-502; these read KPEN…IAKT, PPII…TMEE, PHVL…ILRI, PDVH…QAYA, and PLKG…TLSI. N-linked (GlcNAc...) asparagine glycans are attached at residues N36, N48, and N64. N382 carries N-linked (GlcNAc...) asparagine glycosylation. The chain crosses the membrane as a helical span at residues 500–520; that stretch reads LSISVFEIVLLTSLVGGGLLL. The Cytoplasmic portion of the chain corresponds to 521–716; the sequence is LSIKTVTFGL…NIPEHSKGEV (196 aa). Disordered stretches follow at residues 622 to 641 and 648 to 696; these read EYVTSPSRPDGPPGKSFKEP and ASED…LKNS. Residues 670-679 are compositionally biased toward polar residues; it reads QPSSSCQSPG.

This sequence belongs to the type I cytokine receptor family. Type 2 subfamily. As to quaternary structure, heterodimer with OSMR. Interacts with JAK1 and STAT3. Post-translationally, N-glycosylated. In terms of tissue distribution, expressed in a subset of dorsal root ganglia neurons. Expressed in spinal cord and trigeminal ganglion (at protein level). Expressed in skin, testis, bone marrow and thymus.

It localises to the cell membrane. The protein resides in the presynaptic cell membrane. The protein localises to the cell projection. Its subcellular location is the axon. Associates with OSMR to form the interleukin-31 receptor which activates STAT3 and to a lower extent STAT1 and STAT5. May function in skin immunity. Mediates IL31-induced itch, probably in a manner dependent on cation channels TRPA1 and TRPV1. Positively regulates numbers and cycling status of immature subsets of myeloid progenitor cells in bone marrow in vivo and enhances myeloid progenitor cell survival in vitro. The polypeptide is Interleukin-31 receptor subunit alpha (Il31ra) (Mus musculus (Mouse)).